A 491-amino-acid chain; its full sequence is Leucine aminopeptidase 1 (491 aa).

Zn(2+) contacts are provided by K252 and D257. The active site involves K264. Positions 275, 334, and 336 each coordinate Zn(2+). R338 is a catalytic residue.

The protein belongs to the peptidase M17 family. Requires Zn(2+) as cofactor. Expressed in the buccal cavity, pharynx, anterior gut and rectum.

The catalysed reaction is Release of an N-terminal amino acid, Xaa-|-Yaa-, in which Xaa is preferably Leu, but may be other amino acids including Pro although not Arg or Lys, and Yaa may be Pro. Amino acid amides and methyl esters are also readily hydrolyzed, but rates on arylamides are exceedingly low.. Its function is as follows. Probably acts as a digestive enzyme. This is Leucine aminopeptidase 1 (lap-1) from Caenorhabditis elegans.